Reading from the N-terminus, the 85-residue chain is Sec-independent protein translocase protein TatA (85 aa).

A helical transmembrane segment spans residues methionine 1 to glycine 21. The segment at methionine 43 to alanine 85 is disordered. Residues aspartate 46–alanine 57 show a composition bias toward basic and acidic residues. A compositionally biased stretch (low complexity) spans alanine 58–alanine 73. The segment covering threonine 74–alanine 85 has biased composition (basic and acidic residues).

It belongs to the TatA/E family. The Tat system comprises two distinct complexes: a TatABC complex, containing multiple copies of TatA, TatB and TatC subunits, and a separate TatA complex, containing only TatA subunits. Substrates initially bind to the TatABC complex, which probably triggers association of the separate TatA complex to form the active translocon.

Its subcellular location is the cell inner membrane. Its function is as follows. Part of the twin-arginine translocation (Tat) system that transports large folded proteins containing a characteristic twin-arginine motif in their signal peptide across membranes. TatA could form the protein-conducting channel of the Tat system. The polypeptide is Sec-independent protein translocase protein TatA (Shewanella sp. (strain ANA-3)).